A 372-amino-acid chain; its full sequence is Spermidine/putrescine import ATP-binding protein PotA (372 aa).

The ABC transporter domain maps to 11–241 (IELRSIKKSY…PANLFVARFI (231 aa)). Residue 43 to 50 (GPSGCGKT) coordinates ATP.

This sequence belongs to the ABC transporter superfamily. Spermidine/putrescine importer (TC 3.A.1.11.1) family. In terms of assembly, the complex is composed of two ATP-binding proteins (PotA), two transmembrane proteins (PotB and PotC) and a solute-binding protein (PotD).

Its subcellular location is the cell inner membrane. The enzyme catalyses ATP + H2O + polyamine-[polyamine-binding protein]Side 1 = ADP + phosphate + polyamineSide 2 + [polyamine-binding protein]Side 1.. Functionally, part of the ABC transporter complex PotABCD involved in spermidine/putrescine import. Responsible for energy coupling to the transport system. This Haemophilus influenzae (strain 86-028NP) protein is Spermidine/putrescine import ATP-binding protein PotA.